A 153-amino-acid polypeptide reads, in one-letter code: Superoxide dismutase [Cu-Zn] (153 aa).

The Cu cation site is built by H45, H47, and H62. C56 and C145 are joined by a disulfide. H62, H70, H79, and D82 together coordinate Zn(2+). Residue H119 participates in Cu cation binding.

This sequence belongs to the Cu-Zn superoxide dismutase family. As to quaternary structure, homodimer. Cu cation serves as cofactor. Requires Zn(2+) as cofactor.

The protein localises to the cytoplasm. It carries out the reaction 2 superoxide + 2 H(+) = H2O2 + O2. Functionally, destroys radicals which are normally produced within the cells and which are toxic to biological systems. The sequence is that of Superoxide dismutase [Cu-Zn] from Drosophila willistoni (Fruit fly).